Consider the following 79-residue polypeptide: Hematopoietic cell signal transducer (79 aa).

The first 18 residues, 1-18, serve as a signal peptide directing secretion; it reads MVPPGNILFLLLLPVATA. Residues 19–35 are Extracellular-facing; the sequence is QMTPGSCSGCGPLSLPL. A helical membrane pass occupies residues 36-56; that stretch reads LAGLVAADAVVSLLIVVVVFV. Residues 57–79 are Cytoplasmic-facing; it reads CARLRSRPTQEDDKIYINMPGRG. Phosphotyrosine is present on tyrosine 72. The interval 72–74 is GRB2 binding site; it reads YIN. The interval 72–75 is PIK3R1 binding site; it reads YINM.

This sequence belongs to the DAP10 family. Homodimer; Disulfide-linked. Heterohexamer composed of four subunits of HCST/DAP10 and two subunits of KLRK1. Interacts (via transmembrane domain) with KLRK1 (via transmembrane domain); the interaction is required for KLRK1 NK cell surface and induces NK cell-mediated cytotoxicity. Interacts with PIK3R1 and GRB2. Interacts with CLEC5A. Forms an CLEC5A/TYROBP/HCST trimolecular complex depending almost solely on TYROBP. Interacts with KLRK1. Interacts with CD300H. In terms of processing, phosphorylated; PIK3R1 and GRB2 associate specifically with tyrosine-phosphorylated HCST. Post-translationally, O-glycosylated.

The protein localises to the membrane. Its function is as follows. Transmembrane adapter protein which associates with KLRK1 to form an activation receptor KLRK1-HCST in lymphoid and myeloid cells; this receptor plays a major role in triggering cytotoxicity against target cells expressing cell surface ligands such as MHC class I chain-related MICA and MICB, and UL16-binding proteins (ULBPs); these ligands are up-regulated by stress conditions and pathological state such as viral infection and tumor transformation. Functions as a docking site for PI3-kinase PIK3R1 and GRB2. Interaction of ULBPs with KLRK1-HCST triggers calcium mobilization and activation of the PIK3R1, MAP2K/ERK, and JAK2/STAT5 signaling pathways. Both PIK3R1 and GRB2 are required for full KLRK1-HCST-mediated activation and ultimate killing of target cells. In NK cells, KLRK1-HCST signaling directly induces cytotoxicity and enhances cytokine production initiated via DAP12/TYROBP-associated receptors. In T-cells, it provides primarily costimulation for TCR-induced signals. KLRK1-HCST receptor plays a role in immune surveillance against tumors and is required for cytolysis of tumors cells; indeed, melanoma cells that do not express KLRK1 ligands escape from immune surveillance mediated by NK cells. This Bos taurus (Bovine) protein is Hematopoietic cell signal transducer (HCST).